Consider the following 843-residue polypeptide: Eisosome protein 1 (843 aa).

The interval 1–53 is disordered; it reads MSLISAVEDRDIHNIGKTSGGGSRTSSITSSKKSLKHGSKSLRKPKVYQTTGE. The residue at position 2 (Ser2) is an N-acetylserine. Ser2 carries the post-translational modification Phosphoserine. The span at 33-46 shows a compositional bias: basic residues; it reads KSLKHGSKSLRKPK. A phosphoserine mark is found at Ser88 and Ser130. A disordered region spans residues 120 to 174; it reads KMGPKVVRNNSITSATSKTSKESQTKRKSKESPGAAASKAYSMTMETTSLSSQTN. Composition is skewed to polar residues over residues 127–137 and 163–174; these read RNNSITSATSK and TMETTSLSSQTN. Phosphoserine is present on residues Ser182, Ser401, Ser584, and Ser710. The disordered stretch occupies residues 717–843; sequence DLPTQLEKIE…QDAISNQEKK (127 aa). Residue Thr720 is modified to Phosphothreonine. The span at 752 to 764 shows a compositional bias: low complexity; it reads STAAKEATETSSA. A phosphoserine mark is found at Ser763 and Ser775. Over residues 781 to 797 the composition is skewed to basic and acidic residues; sequence SGKEDANDCKSAEHSKE. The segment covering 798-810 has biased composition (polar residues); it reads ISVSQKAGNNKSL. Phosphoserine occurs at positions 816, 828, 829, and 838.

It belongs to the EIS1 family.

The protein resides in the cytoplasmic granule. It is found in the cell membrane. In terms of biological role, required for normal formation of eisosomes, large cytoplasmic protein assemblies that localize to specialized domains on plasma membrane and mark the site of endocytosis. The polypeptide is Eisosome protein 1 (EIS1) (Saccharomyces cerevisiae (strain ATCC 204508 / S288c) (Baker's yeast)).